Reading from the N-terminus, the 216-residue chain is Protein InaA (216 aa).

It belongs to the protein kinase superfamily. KdkA/RfaP family.

May be an environmental sensor responsive to several stimuli, including internal pH, proton motive force, temperature, and possibly other unknown factors. This is Protein InaA (inaA) from Escherichia coli (strain K12).